The following is a 1001-amino-acid chain: Integrator complex subunit 7 (1001 aa).

The segment at 980-1001 (DPSKQGAPAPSTSQAVGQTRRF) is disordered. Residues 989 to 1001 (PSTSQAVGQTRRF) show a composition bias toward polar residues.

The protein belongs to the Integrator subunit 7 family. In terms of assembly, belongs to the multiprotein complex Integrator, at least composed of IntS1, IntS2, IntS3, IntS4, omd/IntS5, IntS6, defl/IntS7, IntS8, IntS9, IntS10, IntS11, IntS12, asun/IntS13, IntS14 and IntS15. The core complex associates with protein phosphatase 2A subunits mts/PP2A and Pp2A-29B, to form the Integrator-PP2A (INTAC) complex.

It localises to the nucleus. Its subcellular location is the cytoplasm. Its function is as follows. Component of the integrator complex, a multiprotein complex that terminates RNA polymerase II (Pol II) transcription in the promoter-proximal region of genes. The integrator complex provides a quality checkpoint during transcription elongation by driving premature transcription termination of transcripts that are unfavorably configured for transcriptional elongation: the complex terminates transcription by (1) catalyzing dephosphorylation of the C-terminal domain (CTD) of Pol II subunit Polr2A/Rbp1 and Spt5, and (2) degrading the exiting nascent RNA transcript via endonuclease activity. The integrator complex is also involved in the 3'-end processing of the U7 snRNA, and also the spliceosomal snRNAs U1, U2, U4 and U5. In Drosophila melanogaster (Fruit fly), this protein is Integrator complex subunit 7.